We begin with the raw amino-acid sequence, 365 residues long: Phospho-N-acetylmuramoyl-pentapeptide-transferase (365 aa).

10 consecutive transmembrane segments (helical) span residues 22–42 (YISV…LALG), 74–94 (TMGG…WGDL), 95–115 (TSIY…IGFF), 133–153 (YKFA…FYLL), 168–188 (SLYI…IING), 201–221 (GLAI…AYIE), 240–260 (LAEV…FLWF), 267–287 (VFMG…IAVM), 292–312 (LIFF…MLQV), and 342–362 (KVVI…LAAI).

It belongs to the glycosyltransferase 4 family. MraY subfamily. The cofactor is Mg(2+).

The protein localises to the cell inner membrane. It carries out the reaction UDP-N-acetyl-alpha-D-muramoyl-L-alanyl-gamma-D-glutamyl-meso-2,6-diaminopimeloyl-D-alanyl-D-alanine + di-trans,octa-cis-undecaprenyl phosphate = di-trans,octa-cis-undecaprenyl diphospho-N-acetyl-alpha-D-muramoyl-L-alanyl-D-glutamyl-meso-2,6-diaminopimeloyl-D-alanyl-D-alanine + UMP. It participates in cell wall biogenesis; peptidoglycan biosynthesis. Catalyzes the initial step of the lipid cycle reactions in the biosynthesis of the cell wall peptidoglycan: transfers peptidoglycan precursor phospho-MurNAc-pentapeptide from UDP-MurNAc-pentapeptide onto the lipid carrier undecaprenyl phosphate, yielding undecaprenyl-pyrophosphoryl-MurNAc-pentapeptide, known as lipid I. The polypeptide is Phospho-N-acetylmuramoyl-pentapeptide-transferase (Francisella tularensis subsp. tularensis (strain FSC 198)).